Consider the following 229-residue polypeptide: 2-C-methyl-D-erythritol 4-phosphate cytidylyltransferase (229 aa).

This sequence belongs to the IspD/TarI cytidylyltransferase family. IspD subfamily.

It carries out the reaction 2-C-methyl-D-erythritol 4-phosphate + CTP + H(+) = 4-CDP-2-C-methyl-D-erythritol + diphosphate. It participates in isoprenoid biosynthesis; isopentenyl diphosphate biosynthesis via DXP pathway; isopentenyl diphosphate from 1-deoxy-D-xylulose 5-phosphate: step 2/6. Functionally, catalyzes the formation of 4-diphosphocytidyl-2-C-methyl-D-erythritol from CTP and 2-C-methyl-D-erythritol 4-phosphate (MEP). The polypeptide is 2-C-methyl-D-erythritol 4-phosphate cytidylyltransferase (Clostridium botulinum (strain Langeland / NCTC 10281 / Type F)).